We begin with the raw amino-acid sequence, 237 residues long: Cysteine-rich venom protein DIS2 (237 aa).

The first 18 residues, 1 to 18 (MFVFILLSLAAVLQQSFG), serve as a signal peptide directing secretion. Positions 37-165 (VDKHNAFRRS…SYNYFYVCQY (129 aa)) constitute an SCP domain. 7 disulfide bridges follow: Cys-74-Cys-152, Cys-91-Cys-166, Cys-147-Cys-163, Cys-185-Cys-192, Cys-188-Cys-197, Cys-201-Cys-234, and Cys-219-Cys-232. The ShKT domain maps to 201-234 (CSREDVFMNCKSLVAQSNCQDDYIRKNCPATCFC).

The protein belongs to the CRISP family. As to expression, expressed by the venom gland.

It localises to the secreted. Functionally, weakly blocks contraction of smooth muscle elicited by high potassium-induced depolarization, but does not block caffeine-stimulated contraction. May target voltage-gated calcium channels on smooth muscle. The sequence is that of Cysteine-rich venom protein DIS2 from Dispholidus typus (Boomslang).